The chain runs to 112 residues: Peptidyl-prolyl cis-trans isomerase (112 aa).

The interval 1–22 is disordered; it reads MGVEKQVISSGNGQDFPKPGDR. The PPIase FKBP-type domain maps to 20 to 108; it reads GDRITMHYTG…LFDVELLAIN (89 aa).

The protein belongs to the FKBP-type PPIase family. FKBP1 subfamily.

Its subcellular location is the cytoplasm. It localises to the nucleus. It carries out the reaction [protein]-peptidylproline (omega=180) = [protein]-peptidylproline (omega=0). Its function is as follows. PPIases accelerate the folding of proteins. It catalyzes the cis-trans isomerization of proline imidic peptide bonds in oligopeptides. Has an important role in sexual development and serves as the target for rapamycin action. This chain is Peptidyl-prolyl cis-trans isomerase (fkh1), found in Schizosaccharomyces pombe (strain 972 / ATCC 24843) (Fission yeast).